The primary structure comprises 521 residues: Putative FNIP repeat-containing protein L162 (521 aa).

FNIP repeat units follow at residues 179–221 (FNKS…LGYK) and 222–263 (YNYP…MGGR).

The chain is Putative FNIP repeat-containing protein L162 from Acanthamoeba polyphaga mimivirus (APMV).